The chain runs to 647 residues: 2',3'-cyclic-nucleotide 2'-phosphodiesterase/3'-nucleotidase (647 aa).

An N-terminal signal peptide occupies residues 1–19 (MIKFSATLLATLIAASVNA). A divalent metal cation is bound by residues aspartate 31, histidine 33, aspartate 76, asparagine 116, histidine 225, histidine 257, and histidine 259. Substrate is bound by residues tyrosine 440 and 544–550 (YRAYGGK).

Belongs to the 5'-nucleotidase family. A divalent metal cation is required as a cofactor.

Its subcellular location is the periplasm. It catalyses the reaction a nucleoside 2',3'-cyclic phosphate + H2O = a nucleoside 3'-phosphate + H(+). The enzyme catalyses a ribonucleoside 3'-phosphate + H2O = a ribonucleoside + phosphate. Functionally, this bifunctional enzyme catalyzes two consecutive reactions during ribonucleic acid degradation. Converts a 2',3'-cyclic nucleotide to a 3'-nucleotide and then the 3'-nucleotide to the corresponding nucleoside and phosphate. In Salmonella typhimurium (strain LT2 / SGSC1412 / ATCC 700720), this protein is 2',3'-cyclic-nucleotide 2'-phosphodiesterase/3'-nucleotidase (cpdB).